The primary structure comprises 307 residues: Ribosomal RNA small subunit methyltransferase A (307 aa).

Residues Asn-35, Val-37, Gly-62, Glu-83, Asp-113, and Asn-136 each coordinate S-adenosyl-L-methionine.

It belongs to the class I-like SAM-binding methyltransferase superfamily. rRNA adenine N(6)-methyltransferase family. RsmA subfamily.

It is found in the cytoplasm. It carries out the reaction adenosine(1518)/adenosine(1519) in 16S rRNA + 4 S-adenosyl-L-methionine = N(6)-dimethyladenosine(1518)/N(6)-dimethyladenosine(1519) in 16S rRNA + 4 S-adenosyl-L-homocysteine + 4 H(+). Specifically dimethylates two adjacent adenosines (A1518 and A1519) in the loop of a conserved hairpin near the 3'-end of 16S rRNA in the 30S particle. May play a critical role in biogenesis of 30S subunits. The sequence is that of Ribosomal RNA small subunit methyltransferase A from Bifidobacterium longum subsp. infantis (strain ATCC 15697 / DSM 20088 / JCM 1222 / NCTC 11817 / S12).